A 323-amino-acid chain; its full sequence is MGNRVSREDFEWVYTDQPHATRRQEILAKYPEIKSLMKPDSNLIWIVIMMVLTQFVAFYLVKDLDWKWVLFWAYAFGSCVNHSMTLAIHEVSHNSAFGHYKAMWNRWFGIFANLPIGVPYSVSFKRYHMDHHRYLGADGIDVDIPTDFEGWFFCTTFRKFIWVILQPLFYAFRPLFINPKPISYLEIINTVIQITFDIVVYYVLGVKSLVYMLAASLFGLGLHPISGHFIAEHYMFLKGHETYSYYGPLNLLTFNVGYHNEHHDFPNIPGKSLPLVRKIAAEYYDNLPHYNSWIKVLYDFVTDDTISPYSRMKRHLKGNEVQE.

Gly2 carries N-myristoyl glycine lipidation. The next 2 helical transmembrane spans lie at 41 to 61 and 68 to 88; these read SNLI…FYLV and WVLF…TLAI. The Histidine box-1 motif lies at 89 to 93; that stretch reads HEVSH. The chain crosses the membrane as a helical span at residues 102–122; it reads AMWNRWFGIFANLPIGVPYSV. The short motif at 128–132 is the Histidine box-2 element; that stretch reads HMDHH. Transmembrane regions (helical) follow at residues 152-172, 184-204, and 209-229; these read FFCT…FYAF, YLEI…YYVL, and LVYM…SGHF. Residues 259–263 carry the Histidine box-3 motif; that stretch reads HNEHH. A Phosphoserine modification is found at Ser307.

It belongs to the fatty acid desaturase type 1 family. DEGS subfamily. Interacts with RLBP1; the interaction increases synthesis of chromophore-precursors by DEGS1. Myristoylation can target the enzyme to the mitochondria leading to an increase in ceramide levels.

It is found in the mitochondrion membrane. The protein resides in the endoplasmic reticulum membrane. It catalyses the reaction an N-acylsphinganine + 2 Fe(II)-[cytochrome b5] + O2 + 2 H(+) = an N-acylsphing-4-enine + 2 Fe(III)-[cytochrome b5] + 2 H2O. The enzyme catalyses all-trans-retinol = 11-cis-retinol. The catalysed reaction is all-trans-retinol = 9-cis-retinol. It carries out the reaction all-trans-retinol = 13-cis-retinol. It catalyses the reaction 11-cis-retinol = 13-cis-retinol. The enzyme catalyses 11-cis-retinol = 9-cis-retinol. Has sphingolipid-delta-4-desaturase activity. Converts D-erythro-sphinganine to D-erythro-sphingosine (E-sphing-4-enine). Catalyzes the equilibrium isomerization of retinols. In Bos taurus (Bovine), this protein is Sphingolipid delta(4)-desaturase DES1 (DEGS1).